The sequence spans 1134 residues: Ovochymase-1 (1134 aa).

Positions 1–22 are cleaved as a signal peptide; the sequence is MGLLASAGLLLLLVIGHPRSLG. The propeptide at 23-46 is activation peptide; the sequence is LKCGIRMVNMKSKEPAVGSRFFSR. In terms of domain architecture, Peptidase S1 1 spans 38-296; the sequence is AVGSRFFSRI…LMDFITQNLF (259 aa). Residue Asn52 is glycosylated (N-linked (GlcNAc...) asparagine). A disulfide bridge connects residues Cys72 and Cys88. His87 (charge relay system) is an active-site residue. An N-linked (GlcNAc...) asparagine glycan is attached at Asn99. Glu116 contributes to the Ca(2+) binding site. Asp139 acts as the Charge relay system in catalysis. 3 disulfide bridges follow: Cys173/Cys243, Cys204/Cys222, and Cys233/Cys262. Ser237 acts as the Charge relay system in catalysis. 2 consecutive CUB domains span residues 284-410 and 419-531; these read VSEL…VTAV and CGSL…FTIL. A glycan (N-linked (GlcNAc...) asparagine) is linked at Asn324. 3 disulfide bridges follow: Cys341–Cys373, Cys419–Cys446, and Cys473–Cys494. Asn431 carries an N-linked (GlcNAc...) asparagine glycan. A glycan (N-linked (GlcNAc...) asparagine) is linked at Asn507. Residues 575-812 enclose the Peptidase S1 2 domain; sequence IAGGEEACPH…FLDWIQSKIN (238 aa). Residues Cys600 and Cys616 are joined by a disulfide bond. Active-site charge relay system residues include His615 and Asp664. 4 disulfides stabilise this stretch: Cys698–Cys769, Cys729–Cys747, Cys759–Cys788, and Cys846–Cys873. The active-site Charge relay system is the Ser763. In terms of domain architecture, CUB 3 spans 846 to 957; it reads CSEAELEKPR…GAFGISYIVL (112 aa). Residue Asn1106 is glycosylated (N-linked (GlcNAc...) asparagine).

The protein belongs to the peptidase S1 family.

Its subcellular location is the secreted. The polypeptide is Ovochymase-1 (OVCH1) (Homo sapiens (Human)).